Consider the following 1248-residue polypeptide: MAKKFNYKLPSMVALTLVGSAVTAHQVQAAETTQDQTTNKNVLDSNKVKATTEQAKAEVKNPTQNISGTQVYQDPAIVQPKTANNKTGNAQVSQKVDTAQVNGDTRANQSATTNNTQPVAKSTSTTAPKTNTNVTNAGYSLVDDEDDNSEHQINPELIKSAAKPAALETQYKAAAPKAKTEATPKVTTFSASAQPRSVAATPKTSLPKYKPQVNSSINDYIRKNNLKAPKIEEDYTSYFPKYAYRNGVGRPEGIVVHDTANDRSTINGEISYMKNNYQNAFVHAFVDGDRIIETAPTDYLSWGVGAVGNPRFINVEIVHTHDYASFARSMNNYADYAATQLQYYGLKPDSAEYDGNGTVWTHYAVSKYLGGTDHADPHGYLRSHNYSYDQLYDLINEKYLIKMGKVAPWGTQFTTTPTTPSKPTTPSKPSTGKLTVAANNGVAQIKPTNSGLYTTVYDKTGKATNEVQKTFAVSKTATLGNQKFYLVQDYNSGNKFGWVKEGDVVYNTAKSPVNVNQSYSIKSGTKLYTVPWGTSKQVAGSVSGSGNQTFKASKQQQIDKSIYLYGSVNGKSGWVSKAYLVDTAKPTPTPIPKPSTPTTNNKLTVSSLNGVAQINAKNNGLFTTVYDKTGKPTKEVQKTFAVTKEASLGGNKFYLVKDYNSPTLIGWVKQGDVIYNNAKSPVNVMQTYTVKPGTKLYSVPWGTYKQEAGAVSGTGNQTFKATKQQQIDKSIYLFGTVNGKSGWVSKAYLAVPAAPKKAVAQPKTAVKAYTVTKPQTTQTVSKIAQVKPNNTGIRASVYEKTAKNGAKYADRTFYVTKERAHGNETYVLLNNTSHNIPLGWFNVKDLNVQNLGKEVKTTQKYTVNKSNNGLSMVPWGTKNQVILTGNNIAQGTFNATKQVSVGKDVYLYGTINNRTGWVNAKDLTAPTAVKPTTSAAKDYNYTYVIKNGNGYYYVTPNSDTAKYSLKAFNEQPFAVVKEQVINGQTWYYGKLSNGKLAWIKSTDLAKELIKYNQTGMTLNQVAQIQAGLQYKPQVQRVPGKWTDANFNDVKHAMDTKRLAQDPALKYQFLRLDQPQNISIDKINQFLKGKGVLENQGAAFNKAAQMYGINEVYLISHALLETGNGTSQLAKGADVVNNKVVTNSNTKYHNVFGIAAYDNDPLREGIKYAKQAGWDTVSKAIVGGAKFIGNSYVKAGQNTLYKMRWNPAHPGTHQYATDVDWANINAKIIKGYYDKIGEVGKYFDIPQYK.

The signal sequence occupies residues 1–29 (MAKKFNYKLPSMVALTLVGSAVTAHQVQA). The segment at 103–134 (GDTRANQSATTNNTQPVAKSTSTTAPKTNTNV) is disordered. The interval 191–767 (ASAQPRSVAA…AVAQPKTAVK (577 aa)) is N-acetylmuramoyl-L-alanine amidase. GW domains lie at 435–509 (TVAA…YNTA), 511–585 (SPVN…DTAK), 604–678 (TVSS…YNNA), 680–754 (SPVN…VPAA), 776–851 (TTQT…VQNL), 853–928 (KEVK…APTA), and 935–1009 (AAKD…KELI). The interval 768–1248 (AYTVTKPQTT…GKYFDIPQYK (481 aa)) is endo-beta-N-acetylglucosaminidase.

In the N-terminal section; belongs to the N-acetylmuramoyl-L-alanine amidase 2 family. The protein in the C-terminal section; belongs to the glycosyl hydrolase 73 family. Oligomer; forms a ring structure at the cell surface which is important for efficient partitioning of daughter cells after cell division. In terms of processing, undergoes proteolytic processing to generate the two extracellular lytic enzymes, probably at the septal region on the cell surface.

Its subcellular location is the secreted. The catalysed reaction is Hydrolyzes the link between N-acetylmuramoyl residues and L-amino acid residues in certain cell-wall glycopeptides.. It catalyses the reaction an N(4)-(oligosaccharide-(1-&gt;3)-[oligosaccharide-(1-&gt;6)]-beta-D-Man-(1-&gt;4)-beta-D-GlcNAc-(1-&gt;4)-alpha-D-GlcNAc)-L-asparaginyl-[protein] + H2O = an oligosaccharide-(1-&gt;3)-[oligosaccharide-(1-&gt;6)]-beta-D-Man-(1-&gt;4)-D-GlcNAc + N(4)-(N-acetyl-beta-D-glucosaminyl)-L-asparaginyl-[protein]. Its function is as follows. Endohydrolysis of the di-N-acetylchitobiosyl unit in high-mannose glycopeptides and glycoproteins containing the -[(Man)5(GlcNAc)2]-Asn structure. One N-acetyl-D-glucosamine residue remains attached to the protein; the rest of the oligosaccharide is released intact. Cleaves the peptidoglycan connecting the daughter cells at the end of the cell division cycle, resulting in the separation of the two newly divided cells. Acts as an autolysin in penicillin-induced lysis. The protein is Bifunctional autolysin (atl) of Staphylococcus aureus (strain Mu50 / ATCC 700699).